The sequence spans 212 residues: ATP phosphoribosyltransferase (212 aa).

The protein belongs to the ATP phosphoribosyltransferase family. Short subfamily. As to quaternary structure, heteromultimer composed of HisG and HisZ subunits.

It is found in the cytoplasm. The catalysed reaction is 1-(5-phospho-beta-D-ribosyl)-ATP + diphosphate = 5-phospho-alpha-D-ribose 1-diphosphate + ATP. The protein operates within amino-acid biosynthesis; L-histidine biosynthesis; L-histidine from 5-phospho-alpha-D-ribose 1-diphosphate: step 1/9. In terms of biological role, catalyzes the condensation of ATP and 5-phosphoribose 1-diphosphate to form N'-(5'-phosphoribosyl)-ATP (PR-ATP). Has a crucial role in the pathway because the rate of histidine biosynthesis seems to be controlled primarily by regulation of HisG enzymatic activity. The protein is ATP phosphoribosyltransferase of Clostridium botulinum (strain Langeland / NCTC 10281 / Type F).